The sequence spans 691 residues: Elongation factor G (691 aa).

The tr-type G domain maps to 8-283 (EDYRNFGIMA…AVVDFLPNPT (276 aa)). GTP is bound by residues 17–24 (AHIDAGKT), 81–85 (DTPGH), and 135–138 (NKMD).

This sequence belongs to the TRAFAC class translation factor GTPase superfamily. Classic translation factor GTPase family. EF-G/EF-2 subfamily.

The protein localises to the cytoplasm. In terms of biological role, catalyzes the GTP-dependent ribosomal translocation step during translation elongation. During this step, the ribosome changes from the pre-translocational (PRE) to the post-translocational (POST) state as the newly formed A-site-bound peptidyl-tRNA and P-site-bound deacylated tRNA move to the P and E sites, respectively. Catalyzes the coordinated movement of the two tRNA molecules, the mRNA and conformational changes in the ribosome. This is Elongation factor G from Maricaulis maris (strain MCS10) (Caulobacter maris).